Reading from the N-terminus, the 238-residue chain is Sugar fermentation stimulation protein homolog (238 aa).

This sequence belongs to the SfsA family.

The protein is Sugar fermentation stimulation protein homolog of Histophilus somni (strain 2336) (Haemophilus somnus).